The following is a 346-amino-acid chain: MTEYKKPIITEMRPKITVIGVGGGGGNAINNMIAENLQGVDFIAANTDAQALATSKAERRIQLGAAITEGLGAGSVPDIGNAAAQESIDEIMDHLGGTHMCFVTAGMGGGTGTGAAPVIAEAARRAGILTVAVVTKPFSFEGQRRMQTAELGVERLRESADTVIVIPNQNLFRIADAKTTFADAFMIADRVLYSGVSCITDLIVKEGLMNLDFADVKTVMKGMGRAMMGTGEATGENRAMLAAEAAIANPLLDEVSMRGAKGVLVSISGGMDMTLFEVDEAATRIREEVYDEADIVVGAIFDRSLDGTFRVSVVATGLDSNRSAQPTAPEAMNGQTAAAVPSRTLQ.

Residues 23 to 27, 110 to 112, Glu141, Arg145, and Asp189 each bind GTP; these read GGGGN and GTG. The segment at 320–346 is disordered; the sequence is SNRSAQPTAPEAMNGQTAAAVPSRTLQ.

It belongs to the FtsZ family. Homodimer. Polymerizes to form a dynamic ring structure in a strictly GTP-dependent manner. Interacts directly with several other division proteins.

The protein resides in the cytoplasm. Functionally, essential cell division protein that forms a contractile ring structure (Z ring) at the future cell division site. The regulation of the ring assembly controls the timing and the location of cell division. One of the functions of the FtsZ ring is to recruit other cell division proteins to the septum to produce a new cell wall between the dividing cells. Binds GTP and shows GTPase activity. The chain is Cell division protein FtsZ 2 from Rhizobium meliloti (strain 1021) (Ensifer meliloti).